Here is a 157-residue protein sequence, read N- to C-terminus: MPRKRKSRGTRDVAEILRKWREYNEQTEADSCIDGGGSKPIRKAPPKRSRKGCMKGKGGPENGICDYTGVRQRTWGKWVAEIREPGRGAKLWLGTFSSSYEAALAYDEASKAIYGQSARLNLPLLPLCQARLLHFLMNLKFVHVRIQMQDLVLVRSD.

The Nuclear localization signal motif lies at 5 to 21; it reads RKSRGTRDVAEILRKWR. The interval 29 to 57 is disordered; sequence ADSCIDGGGSKPIRKAPPKRSRKGCMKGK. Basic residues predominate over residues 40–54; sequence PIRKAPPKRSRKGCM. The AP2/ERF DNA-binding region spans 66–123; the sequence is DYTGVRQRTWGKWVAEIREPGRGAKLWLGTFSSSYEAALAYDEASKAIYGQSARLNLP.

Belongs to the AP2/ERF transcription factor family. ERF subfamily.

It is found in the nucleus. Functionally, putative transcriptional activator that binds specifically to the DNA sequence 5'-[AG]CCGAC-3'. This Arabidopsis thaliana (Mouse-ear cress) protein is Putative dehydration-responsive element-binding protein 2H (DREB2H).